The following is a 238-amino-acid chain: Survival of motor neuron-related-splicing factor 30 (238 aa).

Residues serine 72–lysine 132 enclose the Tudor domain. The short motif at lysine 142–lysine 160 is the Nuclear localization signal element. Serine 201 carries the post-translational modification Phosphoserine. Lysine 219 carries the N6-acetyllysine modification.

It belongs to the SMN family. Associates with spliceosomes. Associates with U4/U5/U6 tri-snRNP and with U2 snRNP. Interacts (via Tudor domain) with SNRPD3 (via C-terminus); the interaction is direct. In terms of tissue distribution, detected at intermediate levels in skeletal muscle, and at low levels in heart and pancreas.

The protein localises to the nucleus speckle. Its subcellular location is the nucleus. The protein resides in the cajal body. Its function is as follows. Involved in spliceosome assembly. The protein is Survival of motor neuron-related-splicing factor 30 (SMNDC1) of Homo sapiens (Human).